Consider the following 153-residue polypeptide: uncharacterized protein (153 aa).

An N-terminal signal peptide occupies residues 1–22 (MKMLKKGTAVLFVMIMAVMLVA). Cys23 carries the N-palmitoyl cysteine lipid modification. The S-diacylglycerol cysteine moiety is linked to residue Cys23. Positions 117-153 (DMNKIPGMSSNGDTSKGISMEESAKMLESQGYKEVSK) are disordered. The segment covering 124 to 133 (MSSNGDTSKG) has biased composition (polar residues).

This sequence to E.coli YehR.

It localises to the cell membrane. This is an uncharacterized protein from Listeria monocytogenes serovar 1/2a (strain ATCC BAA-679 / EGD-e).